Reading from the N-terminus, the 1311-residue chain is Protein PARALOG OF AIPP2 (1311 aa).

3 disordered regions span residues 1–21 (MADRRVGKRQMGQRGFSKVES), 114–141 (ISDDSGAAAMTSKPSLSGSRMKHKVSAS), and 178–280 (GNKD…EMVE). The span at 213–240 (NHDDRVSSEKGNFKEKSRPGGNKERQEP) shows a compositional bias: basic and acidic residues. Positions 258–270 (SKSSSSNSSAVSE) are enriched in low complexity. A PHD-type zinc finger spans residues 283-334 (VKVCDICGDAGREDLLAICSGCSDGAEHTYCMREMLDEVPEGDWLCEECAEE). Residues cysteine 286, cysteine 289, cysteine 301, cysteine 304, histidine 310, cysteine 313, cysteine 328, and cysteine 331 each coordinate Zn(2+). Positions 328–348 (CEECAEEAEKQKQEAKRKRET) form a coiled coil. Disordered regions lie at residues 369-390 (PDAKRQVVEASTGSPKKSILPR), 411-440 (NHQTSFSDDTESARSAGSQLQPPKGAFLKS), 460-701 (HPRQ…EDLN), 975-1050 (TNPQ…PSKK), 1059-1078 (EAGVNHIPPQVTGSNSGDSL), 1087-1138 (EQEL…NPAN), 1152-1186 (NDGLCEGSPNKKLKTENGSSSLCRDTSGHDSGIMK), and 1249-1311 (LSRS…DLPR). Residues 411-431 (NHQTSFSDDTESARSAGSQLQ) are compositionally biased toward polar residues. Residues 460-472 (HPRQKTGKEDTAL) are compositionally biased toward basic and acidic residues. The segment covering 487–502 (PSRTTDAGNSGGSDSQ) has biased composition (polar residues). Basic and acidic residues predominate over residues 512–528 (HSQEGKSLKQVKDRNRE). A compositionally biased stretch (polar residues) spans 529-552 (ANASASSIDQKLKSRGNSSVSHAN). Over residues 553–566 (NNRDLKGLQSDGKR) the composition is skewed to basic and acidic residues. The segment covering 569–607 (LTKQVSNLSRNRLENSVVSGGDISTNEKCSASEQSSSQA) has biased composition (polar residues). Residues 640–653 (VPREVGKKSKEAFS) are compositionally biased toward basic and acidic residues. 3 stretches are compositionally biased toward polar residues: residues 668 to 694 (PSSQKGGQTAESSDTSGVSDSDLSTTK), 977 to 988 (PQKNTSLPTSNV), and 1014 to 1025 (LRESSSNGIETR). The segment covering 1026-1050 (NGTDARSHENPNNRESSIERSPSKK) has biased composition (basic and acidic residues). Basic and acidic residues predominate over residues 1087-1096 (EQELGGRKDL). The span at 1250 to 1263 (SRSSNSGEQSNNSM) shows a compositional bias: polar residues. A coiled-coil region spans residues 1256 to 1276 (GEQSNNSMNKEKQKADEEEED). The span at 1280-1289 (VAASLSLSLS) shows a compositional bias: low complexity.

Part of the BAH-PHD bivalent histone reader complex that contains AIPP2, PAIPP2 and AIPP3/BDT1; the BAH-PHD module associates with CPL2 to form the BAH-PHD-CPL2 complex (BPC) for transcriptional repression. Binds directly to AIPP3/BDT1 and CPL2, but not to AIPP2. As to expression, expressed ubiquitously.

Its function is as follows. Together with AIPP2 and AIPP3/BDT1, cooperates to form a BAH-PHD bivalent histone reader complex able to read histone H3 lysine 27 trimethylation (H3K27me3) and low-methylated H3K4 histone marks in order to regulate transcription, especially to prevent early flowering; promotes AIPP3/BDT1 binding to H3K27me3. CPL2 is subsequently recruited to form a BAH-PHD-CPL2 complex (BPC) in order to silence several H3K27me3 and low-methylated H3K4 enriched loci, including AGO5, via the phosphorylation state-dependent inhibition of Pol II release from the transcriptional start site (e.g. Ser5P-Pol II dephosphorylation). The BPC complex represses flowering by inhibiting the expression of several genes, including AGL6, FT, FUL and SOC1. This Arabidopsis thaliana (Mouse-ear cress) protein is Protein PARALOG OF AIPP2.